Here is a 121-residue protein sequence, read N- to C-terminus: MARIAGVDIPRDKRVVISLTYIFGIGRTTAQQVLKEAGVSEDTRVRDLTEEELGKIRDIIDKLKVEGDLRREVSLNIKRLIEIGSYRGIRHRRGLPVRGQNSKNNARTRKGPRRTVANKKK.

Residues 93 to 121 (RGLPVRGQNSKNNARTRKGPRRTVANKKK) are disordered. Basic residues predominate over residues 106-121 (ARTRKGPRRTVANKKK).

It belongs to the universal ribosomal protein uS13 family. As to quaternary structure, part of the 30S ribosomal subunit. Forms a loose heterodimer with protein S19. Forms two bridges to the 50S subunit in the 70S ribosome.

Functionally, located at the top of the head of the 30S subunit, it contacts several helices of the 16S rRNA. In the 70S ribosome it contacts the 23S rRNA (bridge B1a) and protein L5 of the 50S subunit (bridge B1b), connecting the 2 subunits; these bridges are implicated in subunit movement. Contacts the tRNAs in the A and P-sites. The protein is Small ribosomal subunit protein uS13 of Bacillus subtilis (strain 168).